We begin with the raw amino-acid sequence, 480 residues long: Protein DETOXIFICATION 15 (480 aa).

The next 12 membrane-spanning stretches (helical) occupy residues 36–56, 69–89, 118–138, 143–163, 180–200, 208–228, 255–275, 294–314, 326–346, 360–380, 396–416, and 428–448; these read GPLI…VMFV, IATS…ASAM, LLSV…VFFG, IAHL…AYGL, VVIC…VLVL, GAAV…SCYV, LVIP…ELLV, VWMI…NELG, RVVL…LILI, VVSH…LDSF, IGAF…GLLL, and WLGI…ITFF.

Belongs to the multi antimicrobial extrusion (MATE) (TC 2.A.66.1) family.

It is found in the membrane. This is Protein DETOXIFICATION 15 from Arabidopsis thaliana (Mouse-ear cress).